A 333-amino-acid chain; its full sequence is Alpha-N-acetylgalactosaminide alpha-2,6-sialyltransferase 6 (333 aa).

The span at 1-12 (MACSRPPSQCDP) shows a compositional bias: polar residues. Residues 1 to 27 (MACSRPPSQCDPTTLPPGPPAGRWPLP) form a disordered region. Residues 1-43 (MACSRPPSQCDPTTLPPGPPAGRWPLPFSRRRREMSSNKEQRS) lie on the Cytoplasmic side of the membrane. A helical; Signal-anchor for type II membrane protein transmembrane segment spans residues 44–64 (AVFVILFALITILILYSSNSA). The Lumenal segment spans residues 65–333 (NEVFHYGSLR…GITFSHPSWT (269 aa)). Asn98 carries N-linked (GlcNAc...) asparagine glycosylation. Cys108 and Cys256 are oxidised to a cystine.

Belongs to the glycosyltransferase 29 family. In terms of tissue distribution, widely expressed, the gene expression is most abundant in colon, brain, liver, and heart.

It is found in the golgi apparatus membrane. The catalysed reaction is a ganglioside GM1b (d18:1(4E)) + CMP-N-acetyl-beta-neuraminate = a ganglioside GD1alpha (d18:1(4E)) + CMP + H(+). The enzyme catalyses a ganglioside GD1a (d18:1(4E)) + CMP-N-acetyl-beta-neuraminate = a ganglioside GT1aalpha (d18:1(4E)) + CMP + H(+). It carries out the reaction a ganglioside GT1b (d18:1(4E)) + CMP-N-acetyl-beta-neuraminate = a ganglioside GQ1balpha (d18:1(4E)) + CMP + H(+). It catalyses the reaction N-acetyl-alpha-neuraminosyl-(2-&gt;3)-beta-D-galactosyl-(1-&gt;3)-N-acetyl-beta-D-glucosaminyl-(1-&gt;3)-beta-D-galactosyl-(1-&gt;4)-beta-D-glucosyl-(1&lt;-&gt;1')-N-acyl-sphing-4-enine + CMP-N-acetyl-beta-neuraminate = N-acetyl-alpha-neuraminosyl-(2-&gt;3)-beta-D-galactosyl-(1-&gt;3)-[N-acetyl-alpha-neuraminosyl-(2-&gt;6)]-N-acetyl-beta-D-glucosaminyl-(1-&gt;3)-beta-D-galactosyl-(1-&gt;4)-beta-D-glucosyl-(1&lt;-&gt;1')-N-acyl-sphing-4-enine + CMP + H(+). The catalysed reaction is a globoside MSGG + CMP-N-acetyl-beta-neuraminate = a globoside DSGG + CMP + H(+). The enzyme catalyses 3-O-[alpha-Neu5Ac-(2-&gt;3)-beta-D-Gal-(1-&gt;3)-alpha-D-GalNAc]-L-Ser-[protein] + CMP-N-acetyl-beta-neuraminate = a 3-O-{alpha-Neu5Ac-(2-&gt;3)-beta-D-Gal-(1-&gt;3)-[alpha-Neu5Ac-(2-&gt;6)]-alpha-D-GalNAc}-L-seryl-[protein] + CMP + H(+). It carries out the reaction 3-O-[alpha-Neu5Ac-(2-&gt;3)-beta-D-Gal-(1-&gt;3)-alpha-D-GalNAc]-L-Thr-[protein] + CMP-N-acetyl-beta-neuraminate = a 3-O-{alpha-Neu5Ac-(2-&gt;3)-beta-D-Gal-(1-&gt;3)-[alpha-Neu5Ac-(2-&gt;6)]-alpha-D-GalNAc}-L-threonyl-[protein] + CMP + H(+). Transfers the sialyl group (N-acetyl-alpha-neuraminyl or NeuAc) from CMP-NeuAc onto glycolipids, forming an alpha-2,6-linkage. Produces branched type disialyl structures by transfer of a sialyl group onto the GalNAc or GlcNAc residue inside backbone core chains having a terminal sialic acid with an alpha-2,3-linkage on Gal. ST6GalNAcVI prefers glycolipids to glycoproteins, predominantly catalyzing the biosynthesis of ganglioside GD1alpha from GM1b. Also has activity toward GD1a and GT1b, and can generate DSGG (disialylgalactosylgloboside) from MSGG (monosialylgalactosylgloboside). Besides GMb1, MSGG and other glycolipids, it shows activity towards sialyl Lc4Cer generating disialyl Lc4Cer, which can lead to the synthesis of disialyl Lewis a (Le(a)), suggested to be a cancer-associated antigen. The protein is Alpha-N-acetylgalactosaminide alpha-2,6-sialyltransferase 6 (St6galnac6) of Mus musculus (Mouse).